The following is a 189-amino-acid chain: UPF0251 protein MTH_1178 (189 aa).

It belongs to the UPF0251 family.

This Methanothermobacter thermautotrophicus (strain ATCC 29096 / DSM 1053 / JCM 10044 / NBRC 100330 / Delta H) (Methanobacterium thermoautotrophicum) protein is UPF0251 protein MTH_1178.